The chain runs to 376 residues: Lipoyl synthase 1, mitochondrial (376 aa).

Residues Cys109, Cys114, Cys120, Cys140, Cys144, Cys147, and Ser356 each contribute to the [4Fe-4S] cluster site. Positions 125-345 (ETGTATATIM…QTLGMEMGFR (221 aa)) constitute a Radical SAM core domain.

The protein belongs to the radical SAM superfamily. Lipoyl synthase family. It depends on [4Fe-4S] cluster as a cofactor.

The protein localises to the mitochondrion. The catalysed reaction is [[Fe-S] cluster scaffold protein carrying a second [4Fe-4S](2+) cluster] + N(6)-octanoyl-L-lysyl-[protein] + 2 oxidized [2Fe-2S]-[ferredoxin] + 2 S-adenosyl-L-methionine + 4 H(+) = [[Fe-S] cluster scaffold protein] + N(6)-[(R)-dihydrolipoyl]-L-lysyl-[protein] + 4 Fe(3+) + 2 hydrogen sulfide + 2 5'-deoxyadenosine + 2 L-methionine + 2 reduced [2Fe-2S]-[ferredoxin]. It participates in protein modification; protein lipoylation via endogenous pathway; protein N(6)-(lipoyl)lysine from octanoyl-[acyl-carrier-protein]: step 2/2. Catalyzes the radical-mediated insertion of two sulfur atoms into the C-6 and C-8 positions of the octanoyl moiety bound to the lipoyl domains of lipoate-dependent enzymes, thereby converting the octanoylated domains into lipoylated derivatives. This is Lipoyl synthase 1, mitochondrial from Pisum sativum (Garden pea).